Reading from the N-terminus, the 205-residue chain is Methylthioribulose-1-phosphate dehydratase (205 aa).

The Zn(2+) site is built by histidine 98 and histidine 100.

This sequence belongs to the aldolase class II family. MtnB subfamily. The cofactor is Zn(2+).

The enzyme catalyses 5-(methylsulfanyl)-D-ribulose 1-phosphate = 5-methylsulfanyl-2,3-dioxopentyl phosphate + H2O. Its pathway is amino-acid biosynthesis; L-methionine biosynthesis via salvage pathway; L-methionine from S-methyl-5-thio-alpha-D-ribose 1-phosphate: step 2/6. In terms of biological role, catalyzes the dehydration of methylthioribulose-1-phosphate (MTRu-1-P) into 2,3-diketo-5-methylthiopentyl-1-phosphate (DK-MTP-1-P). This is Methylthioribulose-1-phosphate dehydratase from Gluconacetobacter diazotrophicus (strain ATCC 49037 / DSM 5601 / CCUG 37298 / CIP 103539 / LMG 7603 / PAl5).